Here is a 180-residue protein sequence, read N- to C-terminus: Large ribosomal subunit protein uL16 (180 aa).

This sequence belongs to the universal ribosomal protein uL16 family.

The protein is Large ribosomal subunit protein uL16 of Pyrobaculum aerophilum (strain ATCC 51768 / DSM 7523 / JCM 9630 / CIP 104966 / NBRC 100827 / IM2).